A 1345-amino-acid polypeptide reads, in one-letter code: Major capsid protein (1345 aa).

This sequence belongs to the herpesviridae major capsid protein family. Homomultimer. Makes the hexons and eleven out of twelve pentons. Interacts with triplex proteins 1/TRX1 and 2/TRX2; adjacent capsomers are linked together in groups of three by triplexes, heterotrimeric complexes composed of one molecule of TRX1 and two molecules of TRX2. Interacts with scaffold protein; this interaction allows efficient MCP transport to the host nucleus. Interacts with capsid vertex component 2/CVC2. Interacts with the small capsomere-interacting protein/SCP.

Its subcellular location is the virion. It localises to the host nucleus. Self-assembles to form an icosahedral capsid with a T=16 symmetry, about 200 nm in diameter, and consisting of 150 hexons and 12 pentons (total of 162 capsomers). Hexons form the edges and faces of the capsid and are each composed of six MCP molecules. In contrast, one penton is found at each of the 12 vertices. Eleven of the pentons are MCP pentamers, while the last vertex is occupied by the portal complex. The capsid is surrounded by a layer of proteinaceous material designated the tegument which, in turn, is enclosed in an envelope of host cell-derived lipids containing virus-encoded glycoproteins. In Human herpesvirus 6A (strain Uganda-1102) (HHV-6 variant A), this protein is Major capsid protein.